Here is a 324-residue protein sequence, read N- to C-terminus: Beta-ketoacyl-[acyl-carrier-protein] synthase III (324 aa).

Residues cysteine 112 and histidine 249 contribute to the active site. The tract at residues 250-254 (QANRR) is ACP-binding. Asparagine 279 is a catalytic residue.

This sequence belongs to the thiolase-like superfamily. FabH family. Homodimer.

Its subcellular location is the cytoplasm. It catalyses the reaction malonyl-[ACP] + acetyl-CoA + H(+) = 3-oxobutanoyl-[ACP] + CO2 + CoA. It participates in lipid metabolism; fatty acid biosynthesis. Its function is as follows. Catalyzes the condensation reaction of fatty acid synthesis by the addition to an acyl acceptor of two carbons from malonyl-ACP. Catalyzes the first condensation reaction which initiates fatty acid synthesis and may therefore play a role in governing the total rate of fatty acid production. Possesses both acetoacetyl-ACP synthase and acetyl transacylase activities. Its substrate specificity determines the biosynthesis of branched-chain and/or straight-chain of fatty acids. In Streptococcus pyogenes serotype M3 (strain ATCC BAA-595 / MGAS315), this protein is Beta-ketoacyl-[acyl-carrier-protein] synthase III.